Here is a 217-residue protein sequence, read N- to C-terminus: Vacuolar protein-sorting-associated protein 37 homolog 1 (217 aa).

Residues 1 to 49 (MFNFWGSKDQQQGQSRPQEASSQSPWYSPSLVSSPSSSRPQSSGQISAQ) are disordered. Over residues 8–20 (KDQQQGQSRPQEA) the composition is skewed to polar residues. Positions 21 to 47 (SSQSPWYSPSLVSSPSSSRPQSSGQIS) are enriched in low complexity. The region spanning 137 to 217 (QEKLNELERQ…IHLAAKTSNI (81 aa)) is the VPS37 C-terminal domain.

Belongs to the VPS37 family. Component of the endosomal sorting required for transport complex I (ESCRT-I), composed of ELC, VPS28 and VPS37. Interacts with ELC.

It localises to the endosome. In terms of biological role, component of the ESCRT-I complex (endosomal sorting complex required for transport I), a regulator of vesicular trafficking process. Required for the sorting of endocytic ubiquitinated cargos into multivesicular bodies (MVBs). This chain is Vacuolar protein-sorting-associated protein 37 homolog 1 (VPS37-1), found in Arabidopsis thaliana (Mouse-ear cress).